A 382-amino-acid chain; its full sequence is Carbamoyl phosphate synthase small chain (382 aa).

The segment at 1–189 (MIKSALLVLE…GLPEAKSEDD (189 aa)) is CPSase. Positions 47 and 241 each coordinate L-glutamine. A Glutamine amidotransferase type-1 domain is found at 193 to 380 (HVVAYDFGAK…IELIKHYRSS (188 aa)). The Nucleophile role is filled by Cys269. 5 residues coordinate L-glutamine: Leu270, Gln273, Asn311, Gly313, and Phe314. Active-site residues include His353 and Glu355.

It belongs to the CarA family. As to quaternary structure, composed of two chains; the small (or glutamine) chain promotes the hydrolysis of glutamine to ammonia, which is used by the large (or ammonia) chain to synthesize carbamoyl phosphate. Tetramer of heterodimers (alpha,beta)4.

The catalysed reaction is hydrogencarbonate + L-glutamine + 2 ATP + H2O = carbamoyl phosphate + L-glutamate + 2 ADP + phosphate + 2 H(+). It carries out the reaction L-glutamine + H2O = L-glutamate + NH4(+). It participates in amino-acid biosynthesis; L-arginine biosynthesis; carbamoyl phosphate from bicarbonate: step 1/1. It functions in the pathway pyrimidine metabolism; UMP biosynthesis via de novo pathway; (S)-dihydroorotate from bicarbonate: step 1/3. In terms of biological role, small subunit of the glutamine-dependent carbamoyl phosphate synthetase (CPSase). CPSase catalyzes the formation of carbamoyl phosphate from the ammonia moiety of glutamine, carbonate, and phosphate donated by ATP, constituting the first step of 2 biosynthetic pathways, one leading to arginine and/or urea and the other to pyrimidine nucleotides. The small subunit (glutamine amidotransferase) binds and cleaves glutamine to supply the large subunit with the substrate ammonia. The protein is Carbamoyl phosphate synthase small chain of Salmonella typhi.